A 227-amino-acid polypeptide reads, in one-letter code: Lipoprotein-releasing system ATP-binding protein LolD (227 aa).

Residues 5–227 enclose the ABC transporter domain; the sequence is LICQNITKHY…QDGILRESNS (223 aa). Residue 41-48 participates in ATP binding; it reads GSSGSGKS.

It belongs to the ABC transporter superfamily. Lipoprotein translocase (TC 3.A.1.125) family. The complex is composed of two ATP-binding proteins (LolD) and two transmembrane proteins (LolC and LolE).

Its subcellular location is the cell inner membrane. Its function is as follows. Part of the ABC transporter complex LolCDE involved in the translocation of mature outer membrane-directed lipoproteins, from the inner membrane to the periplasmic chaperone, LolA. Responsible for the formation of the LolA-lipoprotein complex in an ATP-dependent manner. This is Lipoprotein-releasing system ATP-binding protein LolD from Histophilus somni (strain 129Pt) (Haemophilus somnus).